The chain runs to 509 residues: tRNA-2-methylthio-N(6)-dimethylallyladenosine synthase (509 aa).

The span at 1–15 (MNEQQRLASQQANAS) shows a compositional bias: polar residues. The segment at 1-22 (MNEQQRLASQQANASTKKEEKD) is disordered. Residues 66–184 (RKFYIRTYGC…LPYILKDAMF (119 aa)) form the MTTase N-terminal domain. Residues C75, C111, C145, C221, C225, and C228 each coordinate [4Fe-4S] cluster. The Radical SAM core domain maps to 207–437 (RRGDIKAWVN…NELVNEFSAK (231 aa)). The 64-residue stretch at 440–503 (KKYEGQIVEV…TWSLNGELVE (64 aa)) folds into the TRAM domain.

The protein belongs to the methylthiotransferase family. MiaB subfamily. Monomer. The cofactor is [4Fe-4S] cluster.

Its subcellular location is the cytoplasm. The catalysed reaction is N(6)-dimethylallyladenosine(37) in tRNA + (sulfur carrier)-SH + AH2 + 2 S-adenosyl-L-methionine = 2-methylsulfanyl-N(6)-dimethylallyladenosine(37) in tRNA + (sulfur carrier)-H + 5'-deoxyadenosine + L-methionine + A + S-adenosyl-L-homocysteine + 2 H(+). Catalyzes the methylthiolation of N6-(dimethylallyl)adenosine (i(6)A), leading to the formation of 2-methylthio-N6-(dimethylallyl)adenosine (ms(2)i(6)A) at position 37 in tRNAs that read codons beginning with uridine. The chain is tRNA-2-methylthio-N(6)-dimethylallyladenosine synthase from Bacillus cytotoxicus (strain DSM 22905 / CIP 110041 / 391-98 / NVH 391-98).